The following is a 668-amino-acid chain: Penicillin-binding protein 3 (668 aa).

The helical transmembrane segment at 7 to 23 (LLVFLCVGLIGLIGCSK) threads the bilayer. The active-site Acyl-ester intermediate is serine 410.

Belongs to the transpeptidase family.

The protein resides in the cell membrane. It localises to the forespore inner membrane. It is found in the forespore outer membrane. Its subcellular location is the membrane raft. It carries out the reaction Preferential cleavage: (Ac)2-L-Lys-D-Ala-|-D-Ala. Also transpeptidation of peptidyl-alanyl moieties that are N-acyl substituents of D-alanine.. The protein operates within cell wall biogenesis; peptidoglycan biosynthesis. Its function is as follows. Penicillin-binding proteins (PBPs) function in the late steps of murein biosynthesis. Probably required for both cortical and vegetative peptidoglycan synthesis. Although not usually required for cell division, in the absence of PBP 2B (pbpB) it becomes essential. Confers resistance to oxacillin and cephalexin. In Bacillus subtilis (strain 168), this protein is Penicillin-binding protein 3.